A 140-amino-acid chain; its full sequence is MDRKIREQIIAIYSNLQHKQDLTQFAHCLTTKADDNCEDFFNLGLQFQNNQLTALGFNGEGCIISTIASELTLSALEGKTIKEAIVLLEQFMEAVQTGSLSTPLPQALQLLWDFQIDQKRLNCLLLTPQNLLQWLKDFSH.

This is an uncharacterized protein from Mycoplasma pneumoniae (strain ATCC 29342 / M129 / Subtype 1) (Mycoplasmoides pneumoniae).